Consider the following 713-residue polypeptide: Probable ATP-dependent RNA helicase DDX4 (713 aa).

A disordered region spans residues 23 to 240 (EKDKYSSGAN…YIPPPPPEDE (218 aa)). The segment covering 29–44 (SGANGDTFNRTSASSS) has biased composition (polar residues). Basic and acidic residues predominate over residues 71 to 80 (DIGESSKRET). Over residues 85 to 95 (GGFGRGKGFGN) the composition is skewed to gly residues. Residues 178 to 190 (DSGSGDTFQSRSG) are compositionally biased toward polar residues. 2 positions are modified to phosphoserine: S207 and S211. The interaction with RANBP9 stretch occupies residues 213-232 (KSEAEGGESSDIQGPKVTYI). The short motif at 273–301 (LTFEEANLCQTLNNNIAKAGYTKLTPVQK) is the Q motif element. The 184-residue stretch at 304–487 (IPIVLAGRDL…GEFLKSNYLF (184 aa)) folds into the Helicase ATP-binding domain. Residue 317–324 (AQTGSGKT) coordinates ATP. The DEAD box motif lies at 431 to 434 (DEAD). One can recognise a Helicase C-terminal domain in the interval 515–660 (KLVEILRNIG…DVPAWLEEIA (146 aa)). The segment covering 689-703 (GKNTLNTAGISSAQA) has biased composition (polar residues). The disordered stretch occupies residues 689 to 713 (GKNTLNTAGISSAQAPNPVDDESWD). Phosphoserine is present on S711.

This sequence belongs to the DEAD box helicase family. DDX4/VASA subfamily. As to quaternary structure, found in a mRNP complex, at least composed of TDRD1, TDRD6, TDRD7 and DDX4. Interacts with RANBP9. Interacts with RANBP10. Interacts with PIWIL2 and MAEL. Interacts with BMAL1 and CLOCK. Interacts with Tex19.1 and, probably, Tex19.2. Interacts with RBM46. In terms of tissue distribution, testis.

Its subcellular location is the cytoplasm. It is found in the perinuclear region. The catalysed reaction is ATP + H2O = ADP + phosphate + H(+). Its function is as follows. ATP-dependent RNA helicase required during spermatogenesis to repress transposable elements and preventing their mobilization, which is essential for the germline integrity. Acts via the piRNA metabolic process, which mediates the repression of transposable elements during meiosis by forming complexes composed of piRNAs and Piwi proteins and governs the methylation and subsequent repression of transposons. Involved in the secondary piRNAs metabolic process, the production of piRNAs in fetal male germ cells through a ping-pong amplification cycle. Required for PIWIL2 slicing-triggered piRNA biogenesis: helicase activity enables utilization of one of the slice cleavage fragments generated by PIWIL2 and processing these pre-piRNAs into piRNAs. This chain is Probable ATP-dependent RNA helicase DDX4 (Ddx4), found in Rattus norvegicus (Rat).